Here is a 337-residue protein sequence, read N- to C-terminus: Palmitoyltransferase ZDHHC15 (337 aa).

At 1-20 (MRRGWKMALSGGLRCCRRVL) the chain is on the cytoplasmic side. A helical membrane pass occupies residues 21-41 (SWVPVLVIVLVVLWSYYAYVF). Residues 42–56 (ELCLVTVLSPAEKVI) are Lumenal-facing. The chain crosses the membrane as a helical span at residues 57–77 (YLILYHAIFVFFAWTYWKSIF). Residues 78–172 (TLPQQPNQKF…NNCIGFSNYK (95 aa)) lie on the Cytoplasmic side of the membrane. Residues 129 to 179 (RFCDRCHLIKPDRCHHCSVCAMCVLKMDHHCPWVNNCIGFSNYKFFLQFLA) form the DHHC domain. The Zn(2+) site is built by cysteine 131, cysteine 134, histidine 144, cysteine 145, cysteine 148, cysteine 151, and histidine 158. Catalysis depends on cysteine 159, which acts as the S-palmitoyl cysteine intermediate. Cysteine 165 is a binding site for Zn(2+). The helical transmembrane segment at 173 to 193 (FFLQFLAYSVLYCLYIATTVF) threads the bilayer. At 194-210 (SYFIKYWRGELPSVRSK) the chain is on the lumenal side. Residues 211–234 (FHVLFLLFVACMFFVSLVILFGYH) form a helical membrane-spanning segment. The Cytoplasmic segment spans residues 235–337 (CWLVSRNKTT…SSSLAVESET (103 aa)). The interval 293–337 (HSFPMRSMNESQNPLLANEEPWEDNEDDSRDYPEGSSSLAVESET) is disordered. Over residues 312 to 321 (EPWEDNEDDS) the composition is skewed to acidic residues. Residues 327–337 (GSSSLAVESET) show a composition bias toward polar residues.

It belongs to the DHHC palmitoyltransferase family. In terms of processing, autopalmitoylated (in vitro). Expressed mainly in brain.

Its subcellular location is the golgi apparatus membrane. It localises to the postsynaptic density. The catalysed reaction is L-cysteinyl-[protein] + hexadecanoyl-CoA = S-hexadecanoyl-L-cysteinyl-[protein] + CoA. It carries out the reaction L-cysteinyl-[protein] + tetradecanoyl-CoA = S-tetradecanoyl-L-cysteinyl-[protein] + CoA. It catalyses the reaction L-cysteinyl-[protein] + octadecanoyl-CoA = S-octadecanoyl-L-cysteinyl-[protein] + CoA. Inhibited by 2-bromopalmitate. Functionally, palmitoyltransferase that catalyzes the addition of palmitate onto various protein substrates. Has no stringent fatty acid selectivity and in addition to palmitate can also transfer onto target proteins myristate from tetradecanoyl-CoA and stearate from octadecanoyl-CoA. Palmitoylates IGF2R and SORT1, promoting their partitioning to an endosomal membrane subdomain where they can interact with the retromer cargo-selective complex. Thereby, regulates retrograde transport from endosomes to the Golgi apparatus of these lysosomal sorting receptors and plays a role in trafficking of lysosomal proteins. In the nervous system, catalyzes the palmitoylation of DLG4/PSD95 and regulates its synaptic clustering and function in synaptogenesis. Could be involved in the differentiation of dopaminergic neurons and the development of the diencephalon. Could also catalyze the palmitoylation of GAP43. Could also palmitoylate DNAJC5 and regulate its localization to the Golgi membrane. Could also palmitoylate FYN as shown in vitro. May palmitoylate CALHM3 subunit of gustatory voltage-gated ion channels and modulate channel gating and kinetics. This is Palmitoyltransferase ZDHHC15 from Mus musculus (Mouse).